Consider the following 89-residue polypeptide: Large ribosomal subunit protein L37-2 (89 aa).

4 residues coordinate Zn(2+): Cys19, Cys22, Cys34, and Cys37. The C4-type zinc finger occupies Cys19–Cys37.

The protein belongs to the eukaryotic ribosomal protein eL37 family. It depends on Zn(2+) as a cofactor.

In terms of biological role, binds to the 23S rRNA. In Drosophila melanogaster (Fruit fly), this protein is Large ribosomal subunit protein L37-2.